A 141-amino-acid chain; its full sequence is Protein Turandot Z (141 aa).

An N-terminal signal peptide occupies residues 1-23; the sequence is MYFAIRLSFVLAVLFCLTGNGNA.

It belongs to the Turandot family.

The protein localises to the secreted. A humoral factor that may play a role in stress tolerance. This Drosophila yakuba (Fruit fly) protein is Protein Turandot Z.